The primary structure comprises 227 residues: 3,4-dihydroxy-2-butanone 4-phosphate synthase (227 aa).

D-ribulose 5-phosphate contacts are provided by residues 45–46, D50, 158–162, and E182; these read RE and RRGHT. E46 serves as a coordination point for Mg(2+). Residue H161 coordinates Mg(2+).

The protein belongs to the DHBP synthase family. As to quaternary structure, homodimer. It depends on Mg(2+) as a cofactor. The cofactor is Mn(2+).

It catalyses the reaction D-ribulose 5-phosphate = (2S)-2-hydroxy-3-oxobutyl phosphate + formate + H(+). The protein operates within cofactor biosynthesis; riboflavin biosynthesis; 2-hydroxy-3-oxobutyl phosphate from D-ribulose 5-phosphate: step 1/1. In terms of biological role, catalyzes the conversion of D-ribulose 5-phosphate to formate and 3,4-dihydroxy-2-butanone 4-phosphate. The protein is 3,4-dihydroxy-2-butanone 4-phosphate synthase of Ralstonia nicotianae (strain ATCC BAA-1114 / GMI1000) (Ralstonia solanacearum).